Here is a 310-residue protein sequence, read N- to C-terminus: Methionyl-tRNA formyltransferase (310 aa).

111–114 lines the (6S)-5,6,7,8-tetrahydrofolate pocket; that stretch reads SLLP.

The protein belongs to the Fmt family.

The enzyme catalyses L-methionyl-tRNA(fMet) + (6R)-10-formyltetrahydrofolate = N-formyl-L-methionyl-tRNA(fMet) + (6S)-5,6,7,8-tetrahydrofolate + H(+). Functionally, attaches a formyl group to the free amino group of methionyl-tRNA(fMet). The formyl group appears to play a dual role in the initiator identity of N-formylmethionyl-tRNA by promoting its recognition by IF2 and preventing the misappropriation of this tRNA by the elongation apparatus. The sequence is that of Methionyl-tRNA formyltransferase from Rhodopseudomonas palustris (strain BisB18).